The sequence spans 489 residues: CBL-interacting serine/threonine-protein kinase 12 (489 aa).

In terms of domain architecture, Protein kinase spans Y26–F280. Residues L32–V40 and K55 each bind ATP. The active-site Proton acceptor is D148. The tract at residues D166–E195 is activation loop. S170 bears the Phosphoserine mark. T184 is modified (phosphothreonine). The region spanning P336 to D360 is the NAF domain. Residues G363–V392 form a PPI region.

Belongs to the protein kinase superfamily. CAMK Ser/Thr protein kinase family. SNF1 subfamily. In terms of assembly, interacts with CBL2 and CBL3. Mn(2+) is required as a cofactor. As to expression, expressed in roots and shoots.

The enzyme catalyses L-seryl-[protein] + ATP = O-phospho-L-seryl-[protein] + ADP + H(+). It carries out the reaction L-threonyl-[protein] + ATP = O-phospho-L-threonyl-[protein] + ADP + H(+). Its function is as follows. CIPK serine-threonine protein kinases interact with CBL proteins. Binding of a CBL protein to the regulatory NAF domain of CIPK protein lead to the activation of the kinase in a calcium-dependent manner. The protein is CBL-interacting serine/threonine-protein kinase 12 (CIPK12) of Arabidopsis thaliana (Mouse-ear cress).